A 501-amino-acid chain; its full sequence is Lysine--tRNA ligase (501 aa).

Residues E402 and E409 each contribute to the Mg(2+) site.

This sequence belongs to the class-II aminoacyl-tRNA synthetase family. In terms of assembly, homodimer. It depends on Mg(2+) as a cofactor.

It localises to the cytoplasm. It catalyses the reaction tRNA(Lys) + L-lysine + ATP = L-lysyl-tRNA(Lys) + AMP + diphosphate. This is Lysine--tRNA ligase (lysS) from Helicobacter pylori (strain J99 / ATCC 700824) (Campylobacter pylori J99).